Reading from the N-terminus, the 113-residue chain is Hydrogenase maturation factor HybF (113 aa).

Positions 2 and 3 each coordinate Ni(2+). C73, C76, C89, and C92 together coordinate Zn(2+).

Belongs to the HypA/HybF family. HybF subfamily. In terms of assembly, monomer.

Its function is as follows. Involved in the maturation of [NiFe] hydrogenases. Required for nickel insertion into the metal center of the hydrogenase. HybF is involved in maturation of hydrogenases 1 and 2. It may partially substitute for the function of HypA and vice versa. This is Hydrogenase maturation factor HybF from Escherichia coli (strain K12).